Consider the following 151-residue polypeptide: 3-hydroxyacyl-[acyl-carrier-protein] dehydratase FabZ (151 aa).

The active site involves H54.

This sequence belongs to the thioester dehydratase family. FabZ subfamily.

The protein localises to the cytoplasm. It catalyses the reaction a (3R)-hydroxyacyl-[ACP] = a (2E)-enoyl-[ACP] + H2O. Its function is as follows. Involved in unsaturated fatty acids biosynthesis. Catalyzes the dehydration of short chain beta-hydroxyacyl-ACPs and long chain saturated and unsaturated beta-hydroxyacyl-ACPs. The protein is 3-hydroxyacyl-[acyl-carrier-protein] dehydratase FabZ of Sodalis glossinidius (strain morsitans).